A 715-amino-acid polypeptide reads, in one-letter code: MSLELEWMSIDDLKLPSNVIDIIKNRGIKKLNPPQTEAVKKGLLDGNRLLLTSPTGSGKTLIAEMGIISFLLKNGGKAIYVTPLRALTNEKYLTFKDWESIGFKVAMTSGDYDTDDAWLKNYDIIITTYEKLDSLWRHRPDWLNEANYFVLDELHYLNDPERGPVVESVTIRAKRRNLLALSATISNYKQIAKWLGAEPVATNWRPVPLMEGVMYPERKKKEYTILFRDNTTRKVHGDDAIIAYTLDSLSKNGQVLVFRNSRKMAESTALKIANYMNFVSLDEKAISEILNQLDDIEEGGSDEKELLKSLISKGVAYHHAGLSKALRDIIEESFRKRKIKVIVATPTLAAGVNLPARTVIIGDIYRFNRKIVGYYDEIPVMEYKQMSGRAGRPGFDQIGESIIVVRDKEDVDRVFKKYILSDVEPIESKLGSERAFYTFLLGILSAEGSLSEKQLEGFAYESLLAKSLVDVYFDRAIRWLSEHSFIREENNTFTLTNFGKRVADLYINPFTADIIRKGLEGHKASCEIAYLHLLAFTPDGPLVSVGRNEEEELIELLEDLECELLVEEPYEEDEYSLYLNALKVALIMKDWIDEVDEDTILGKYNIGSGDLRNIVETMDWLTYSAYHLSKELRLDDHSDKLRILNLRVTDGVKEELLELVQIGGVGRKRARLLYNNGIKGLGDVVMNPDRVRNLLGQKLGERVVQEAARLLNRFH.

Residues glutamine 35 and 53–60 (SPTGSGKT) contribute to the ATP site. One can recognise a Helicase ATP-binding domain in the interval 40 to 203 (KKGLLDGNRL…WLGAEPVATN (164 aa)). The DEAH box signature appears at 152–155 (DELH). Residues 236–442 (HGDDAIIAYT…ERAFYTFLLG (207 aa)) form the Helicase C-terminal domain.

The protein belongs to the helicase family. Hel308 subfamily. In terms of assembly, monomer. Interacts with PINA ATPase which decreases both DNA helicase activities of this protein.

The enzyme catalyses Couples ATP hydrolysis with the unwinding of duplex DNA by translocating in the 3'-5' direction.. It catalyses the reaction ATP + H2O = ADP + phosphate + H(+). It carries out the reaction Couples ATP hydrolysis with the unwinding of duplex DNA at the replication fork by translocating in the 5'-3' direction. This creates two antiparallel DNA single strands (ssDNA). The leading ssDNA polymer is the template for DNA polymerase III holoenzyme which synthesizes a continuous strand.. With respect to regulation, PINA inhibits the (weak) 5'-3' but not the 3'-5' helicase activity of this protein on overhang substrates. In terms of biological role, DNA-dependent ATPase and 3'-5' DNA helicase that may be involved in repair of stalled replication forks. Functionally, has predominantly 3'-5' helicase activity but also a weak 5'-3' helicase activity. Has the ability to unwind replication forks, preferentially removing the lagging strand. Hjc, Hjm (Hel308) and branch migration ATPase PINA coordinate HJ migration and cleavage of replication forks in a coordinated way. The chain is ATP-dependent DNA helicase Hel308 from Saccharolobus islandicus (strain REY15A) (Sulfolobus islandicus).